The primary structure comprises 175 residues: ATP synthase subunit b (175 aa).

Residues 14-34 (LSPNPGLIFWTTVSFVIVLLI) form a helical membrane-spanning segment.

Belongs to the ATPase B chain family. As to quaternary structure, F-type ATPases have 2 components, F(1) - the catalytic core - and F(0) - the membrane proton channel. F(1) has five subunits: alpha(3), beta(3), gamma(1), delta(1), epsilon(1). F(0) has four main subunits: a(1), b(2) and c(10-14). The alpha and beta chains form an alternating ring which encloses part of the gamma chain. F(1) is attached to F(0) by a central stalk formed by the gamma and epsilon chains, while a peripheral stalk is formed by the delta and b chains.

The protein resides in the cell inner membrane. F(1)F(0) ATP synthase produces ATP from ADP in the presence of a proton or sodium gradient. F-type ATPases consist of two structural domains, F(1) containing the extramembraneous catalytic core and F(0) containing the membrane proton channel, linked together by a central stalk and a peripheral stalk. During catalysis, ATP synthesis in the catalytic domain of F(1) is coupled via a rotary mechanism of the central stalk subunits to proton translocation. Its function is as follows. Component of the F(0) channel, it forms part of the peripheral stalk, linking F(1) to F(0). This chain is ATP synthase subunit b, found in Chlorobium phaeobacteroides (strain DSM 266 / SMG 266 / 2430).